The primary structure comprises 194 residues: Peptidyl-tRNA hydrolase (194 aa).

TRNA is bound at residue Y16. H21 (proton acceptor) is an active-site residue. F67, N69, and N115 together coordinate tRNA.

Belongs to the PTH family. In terms of assembly, monomer.

The protein localises to the cytoplasm. The enzyme catalyses an N-acyl-L-alpha-aminoacyl-tRNA + H2O = an N-acyl-L-amino acid + a tRNA + H(+). Functionally, hydrolyzes ribosome-free peptidyl-tRNAs (with 1 or more amino acids incorporated), which drop off the ribosome during protein synthesis, or as a result of ribosome stalling. Catalyzes the release of premature peptidyl moieties from peptidyl-tRNA molecules trapped in stalled 50S ribosomal subunits, and thus maintains levels of free tRNAs and 50S ribosomes. The sequence is that of Peptidyl-tRNA hydrolase from Escherichia fergusonii (strain ATCC 35469 / DSM 13698 / CCUG 18766 / IAM 14443 / JCM 21226 / LMG 7866 / NBRC 102419 / NCTC 12128 / CDC 0568-73).